The chain runs to 315 residues: Intradiol ring-cleavage dioxygenase prcA (315 aa).

Fe cation contacts are provided by tyrosine 166, tyrosine 200, histidine 224, and histidine 226. The interval lysine 287–leucine 315 is disordered. Over residues arginine 304–leucine 315 the composition is skewed to basic and acidic residues.

It belongs to the intradiol ring-cleavage dioxygenase family. As to quaternary structure, homodimer. Fe(3+) serves as cofactor.

The catalysed reaction is 3,4-dihydroxybenzoate + O2 = 3-carboxy-cis,cis-muconate + 2 H(+). Intradiol ring-cleavage dioxygenase; part of the benzoic acid degradation pathway also known as the protocatechuic acid pathway. Benzoic acid debradation begins with the conversion of benzoic acid into 4-hydroxybenzoic acid through hydroxylation by the benzoate-4-monooxygenase bphA, and its partner NADPH-cytochrome P450 reductase cprA which act as a mediator in electron donation from NADPH. 4-Hydroxybenzoic acid is then converted into 3,4-dihydroxybenzoic acid (also called protocatechuic acid) by the p-hydroxybenzoate-m-hydroxylase phhA. Protocatechuic acid is converted into 3-carboxy-cis,cis-muconic acid by the intradiol ring-cleavage dioxygenase prcA, which is further metabolized through the 3-oxoadipate pathway to finally enter the tricarboxylic acid cycle (TCA). This is Intradiol ring-cleavage dioxygenase prcA from Aspergillus niger (strain ATCC MYA-4892 / CBS 513.88 / FGSC A1513).